Consider the following 5405-residue polypeptide: IgGFc-binding protein (5405 aa).

Positions 1 to 23 (MGALWSWWILWAGATLLWGLTQE) are cleaved as a signal peptide. The interval 24-450 (ASVDLKNTGR…EPSCEGMQCA (427 aa)) is igGFc-binding. Asn75 and Asn91 each carry an N-linked (GlcNAc...) asparagine glycan. In terms of domain architecture, VWFD 1 spans 470-650 (AVCRAQGDPH…KLDDGDYLCE (181 aa)). Intrachain disulfides connect Cys472-Cys611 and Cys494-Cys649. The region spanning 745-799 (CPANSRYELCGPACPTSCNGAAAPSNCSGRPCVEGCVCLPGFVASGGACVPASSC) is the TIL 1 domain. Residues 862–1041 (GTCQGSGDPH…WQEETRPGCG (180 aa)) form the VWFD 2 domain. 2 disulfides stabilise this stretch: Cys864–Cys1003 and Cys886–Cys1040. One can recognise a TIL 2 domain in the interval 1136–1189 (CPPHSHYEACSYGCPLSCGDLPVPGGCGSECHEGCVCDEGFALSGESCLPLASC). A VWFD 3 domain is found at 1250-1429 (STCQASGDPH…EEVVPDSPCL (180 aa)). Disulfide bonds link Cys1252/Cys1390 and Cys1274/Cys1428. The N-linked (GlcNAc...) (complex) asparagine glycan is linked to Asn1317. A TIL 3 domain is found at 1532–1585 (CPPNSHYELCADTCSLGCSALSAPPQCQDGCAEGCQCDSGFLYNGQACVPIQQC). A VWFD 4 domain is found at 1671-1854 (ATCWLWGDPH…RAPGWDPLCW (184 aa)). 3 disulfide bridges follow: Cys1673/Cys1815, Cys1695/Cys1853, and Cys1704/Cys1812. Asn1743 carries an N-linked (GlcNAc...) asparagine glycan. The region spanning 1950-2007 (CPENSHYEVCGSPCPASCPSPAPLTTPAVCEGPCVEGCQCDAGFVLSADRCVPLNNGC) is the TIL 4 domain. A VWFD 5 domain is found at 2070–2253 (AECQAWGDPH…VSKPCPSPCT (184 aa)). Intrachain disulfides connect Cys2072-Cys2211 and Cys2094-Cys2252. Asn2138 is a glycosylation site (N-linked (GlcNAc...) asparagine). In terms of domain architecture, TIL 5 spans 2337–2390 (CPAHSHYELCGDSCPGSCPSLSAPEGCESACREGCVCDAGFVLSGDTCVPVGQC). The 180-residue stretch at 2451–2630 (TTCQASGDPH…EEVVPDSPCL (180 aa)) folds into the VWFD 6 domain. Disulfide bonds link Cys2453–Cys2591 and Cys2475–Cys2629. Asn2518 carries an N-linked (GlcNAc...) asparagine glycan. The region spanning 2733-2786 (CPQNSHYELCADTCSLGCSALSAPLQCPDGCAEGCQCDSGFLYNGQACVPIQQC) is the TIL 6 domain. The VWFD 7 domain maps to 2872–3055 (ATCWLWGDPH…RAPGWDPLCW (184 aa)). Intrachain disulfides connect Cys2874-Cys3016, Cys2896-Cys3054, and Cys2905-Cys3013. The 58-residue stretch at 3151 to 3208 (CPENSHYEVCGPPCPASCPSPAPLTTPAVCEGPCVEGCQCDAGFVLSADRCVPLNNGC) folds into the TIL 7 domain. The region spanning 3271 to 3454 (AECQAWGDPH…VSKPCPSPCT (184 aa)) is the VWFD 8 domain. 2 disulfide bridges follow: Cys3273–Cys3412 and Cys3295–Cys3453. The TIL 8 domain occupies 3538 to 3591 (CPAHSHYELCGDSCPGSCPSLSAPEGCESACREGCVCDAGFVLSGDTCVPVGQC). A VWFD 9 domain is found at 3652-3831 (TTCQASGDPH…EEVVPDSPCL (180 aa)). 2 disulfides stabilise this stretch: Cys3654/Cys3792 and Cys3676/Cys3830. N-linked (GlcNAc...) asparagine glycosylation is present at Asn3719. Residues 3934–3987 (CPQNSHYELCADTCSLGCSALSAPLQCPDGCAEGCQCDSGFLYNGQACVPIQQC) enclose the TIL 9 domain. Positions 4073–4256 (ATCWLWGDPH…RAPGWDPLCW (184 aa)) constitute a VWFD 10 domain. Disulfide bonds link Cys4075–Cys4217, Cys4097–Cys4255, and Cys4106–Cys4214. The N-linked (GlcNAc...) asparagine glycan is linked to Asn4145. Residues 4352–4409 (CPENSHYEVCGPPCPASCPSPAPLTTPAVCEGPCVEGCQCDAGFVLSADRCVPLNNGC) enclose the TIL 10 domain. Residues 4472–4655 (AECQAWGDPH…VSKPCPSPCT (184 aa)) enclose the VWFD 11 domain. Cystine bridges form between Cys4474–Cys4613 and Cys4496–Cys4654. Asn4540 carries an N-linked (GlcNAc...) asparagine glycan. The TIL 11 domain occupies 4739 to 4792 (CPAHSHYELCGDSCPVSCPSLSAPEGCESACREGCVCDAGFVLSGDTCVPVGQC). The VWFD 12 domain maps to 4854–5025 (GRCLANGGIH…RAPGSSKGCG (172 aa)). Cystine bridges form between Cys4856-Cys4986 and Cys4878-Cys5024. Residues 5121–5174 (CPAHSHYSICTRTCQGSCAALSGLTGCTTRCFEGCECDDRFLLSQGVCIPVQDC) enclose the TIL 12 domain. In terms of domain architecture, VWFD 13 spans 5233–5404 (GLCVLSVGAN…WRAQDFSPCY (172 aa)). An intrachain disulfide couples Cys5235 to Cys5372.

As to quaternary structure, interacts with the Fc portion of IgG and with MUC2. As to expression, mainly expressed in placenta and colon epithelium. Expressed in thyroid, and down-regulated in thyroid carcinomas. Present in serum, with higher levels in patients with various autoimmune diseases (at protein level).

It localises to the secreted. May be involved in the maintenance of the mucosal structure as a gel-like component of the mucosa. This chain is IgGFc-binding protein (FCGBP), found in Homo sapiens (Human).